The chain runs to 159 residues: 2-C-methyl-D-erythritol 2,4-cyclodiphosphate synthase (159 aa).

D10 and H12 together coordinate a divalent metal cation. 4-CDP-2-C-methyl-D-erythritol 2-phosphate-binding positions include 10 to 12 and 37 to 38; these read DVH and HS. Position 45 (H45) interacts with a divalent metal cation. Residues 59–61, 64–68, 103–109, 135–138, F142, and R145 each bind 4-CDP-2-C-methyl-D-erythritol 2-phosphate; these read DIG, FLDTD, AQAPKML, and TTTE.

It belongs to the IspF family. Homotrimer. Requires a divalent metal cation as cofactor.

The enzyme catalyses 4-CDP-2-C-methyl-D-erythritol 2-phosphate = 2-C-methyl-D-erythritol 2,4-cyclic diphosphate + CMP. It participates in isoprenoid biosynthesis; isopentenyl diphosphate biosynthesis via DXP pathway; isopentenyl diphosphate from 1-deoxy-D-xylulose 5-phosphate: step 4/6. Functionally, involved in the biosynthesis of isopentenyl diphosphate (IPP) and dimethylallyl diphosphate (DMAPP), two major building blocks of isoprenoid compounds. Catalyzes the conversion of 4-diphosphocytidyl-2-C-methyl-D-erythritol 2-phosphate (CDP-ME2P) to 2-C-methyl-D-erythritol 2,4-cyclodiphosphate (ME-CPP) with a corresponding release of cytidine 5-monophosphate (CMP). This is 2-C-methyl-D-erythritol 2,4-cyclodiphosphate synthase from Francisella tularensis subsp. holarctica (strain FTNF002-00 / FTA).